A 484-amino-acid polypeptide reads, in one-letter code: Cobyric acid synthase (484 aa).

The region spanning 248–435 (VLKVIVPVLP…LHGLFEGSQS (188 aa)) is the GATase cobBQ-type domain. C329 serves as the catalytic Nucleophile. Residue H427 is part of the active site.

It belongs to the CobB/CobQ family. CobQ subfamily.

Its pathway is cofactor biosynthesis; adenosylcobalamin biosynthesis. In terms of biological role, catalyzes amidations at positions B, D, E, and G on adenosylcobyrinic A,C-diamide. NH(2) groups are provided by glutamine, and one molecule of ATP is hydrogenolyzed for each amidation. The sequence is that of Cobyric acid synthase from Pseudomonas putida (strain ATCC 700007 / DSM 6899 / JCM 31910 / BCRC 17059 / LMG 24140 / F1).